The chain runs to 174 residues: Endoribonuclease YbeY (174 aa).

His-129, His-133, and His-139 together coordinate Zn(2+).

This sequence belongs to the endoribonuclease YbeY family. Zn(2+) is required as a cofactor.

The protein localises to the cytoplasm. Functionally, single strand-specific metallo-endoribonuclease involved in late-stage 70S ribosome quality control and in maturation of the 3' terminus of the 16S rRNA. The protein is Endoribonuclease YbeY of Lactobacillus helveticus (strain DPC 4571).